Reading from the N-terminus, the 100-residue chain is ATP synthase subunit c (100 aa).

Helical transmembrane passes span 26-46 and 71-91; these read FSVV…AIGM and MFIA…IALI.

It belongs to the ATPase C chain family. As to quaternary structure, F-type ATPases have 2 components, F(1) - the catalytic core - and F(0) - the membrane proton channel. F(1) has five subunits: alpha(3), beta(3), gamma(1), delta(1), epsilon(1). F(0) has three main subunits: a(1), b(2) and c(10-14). The alpha and beta chains form an alternating ring which encloses part of the gamma chain. F(1) is attached to F(0) by a central stalk formed by the gamma and epsilon chains, while a peripheral stalk is formed by the delta and b chains.

The protein localises to the cell inner membrane. F(1)F(0) ATP synthase produces ATP from ADP in the presence of a proton or sodium gradient. F-type ATPases consist of two structural domains, F(1) containing the extramembraneous catalytic core and F(0) containing the membrane proton channel, linked together by a central stalk and a peripheral stalk. During catalysis, ATP synthesis in the catalytic domain of F(1) is coupled via a rotary mechanism of the central stalk subunits to proton translocation. Functionally, key component of the F(0) channel; it plays a direct role in translocation across the membrane. A homomeric c-ring of between 10-14 subunits forms the central stalk rotor element with the F(1) delta and epsilon subunits. This chain is ATP synthase subunit c, found in Campylobacter fetus subsp. fetus (strain 82-40).